Reading from the N-terminus, the 406-residue chain is Tryptophan synthase beta chain (406 aa).

Position 97 is an N6-(pyridoxal phosphate)lysine (Lys97).

It belongs to the TrpB family. Tetramer of two alpha and two beta chains. Pyridoxal 5'-phosphate is required as a cofactor.

It carries out the reaction (1S,2R)-1-C-(indol-3-yl)glycerol 3-phosphate + L-serine = D-glyceraldehyde 3-phosphate + L-tryptophan + H2O. The protein operates within amino-acid biosynthesis; L-tryptophan biosynthesis; L-tryptophan from chorismate: step 5/5. In terms of biological role, the beta subunit is responsible for the synthesis of L-tryptophan from indole and L-serine. This chain is Tryptophan synthase beta chain, found in Lacticaseibacillus casei (strain BL23) (Lactobacillus casei).